The chain runs to 426 residues: ORC1-type DNA replication protein 1 (426 aa).

ATP is bound by residues 62–66 (VGKTL), tyrosine 211, and arginine 223.

The protein belongs to the CDC6/cdc18 family.

Functionally, involved in regulation of DNA replication. The polypeptide is ORC1-type DNA replication protein 1 (cdc6a) (Haloarcula marismortui (strain ATCC 43049 / DSM 3752 / JCM 8966 / VKM B-1809) (Halobacterium marismortui)).